The primary structure comprises 514 residues: Prolyl 3,4-dihydroxylase OGFOD1 (514 aa).

In terms of domain architecture, Fe2OG dioxygenase spans 114-221; the sequence is GAVDCSCNIY…RVSISGWFHT (108 aa). Residues His132 and Asp134 each contribute to the Fe cation site. A 2-oxoglutarate-binding site is contributed by Tyr146. His200 lines the Fe cation pocket. Arg212 provides a ligand contact to 2-oxoglutarate.

This sequence belongs to the TPA1 family. Monomer and homodimer. Fe(2+) serves as cofactor. Requires L-ascorbate as cofactor.

It catalyses the reaction [ribosomal protein uS12]-L-proline + 2-oxoglutarate + O2 = [ribosomal protein uS12]-(3S)-3-hydroxy-L-proline + succinate + CO2. It carries out the reaction [ribosomal protein uS12]-(3S)-3-hydroxy-L-proline + 2-oxoglutarate + O2 = [ribosomal protein uS12]-(3S)-3,4-dihydroxy-L-proline + succinate + CO2. Prolyl 3,4-dihydroxylase that catalyzes 3,4-dihydroxylation of 'Pro-61' of small ribosomal subunit uS12 (RPS23), thereby regulating protein translation termination efficiency. The chain is Prolyl 3,4-dihydroxylase OGFOD1 (Ogd) from Ostreococcus tauri.